We begin with the raw amino-acid sequence, 611 residues long: MSIHIVALGNEGDTFHQDNRPSGLIRTYLGRSPLVSGDESSLLLNAASTVARPVFTEYQASAFGNVKLVVHDCPVWDIFDSDWYTSRNLIGGADIIVIKYNVNDKFSFHEVKDNYIPVIKRASNSVPVIIAAVGTRQNEELPCTCPLCTSDRGSCVTTTEGIQLAKELGATYLELHSLDDFYIGKYFGGVLEYFMIQALNQKTSEKMKKRKMTSSFHGIRPPQLEQPEKMPVLKAEASHYHSDLNNLLLCCQCVDVVFYHPEVTGVVEAHKIVLCSVSHVFMLLFNVKSPADIQDSSIIRTTQDLFAINRDAVLPGASQEAPSNPPLPVIVKDALFCSCLSDILRFIYSGAFQWEELEEDVRRKLKDSGDVSDIIEKVKCILKTPGKINCLRNCKTYQARKPLWFYNTSLKFFLNKPMLADVVFEIQGATVPAHRAILVARCEVMAAMFNGNYMEAKSVLIPVYGVSKETFLSFLEYLYTDSCCPAGIFQAMCLLICAEMYQVSRLQHICELFIITQLQSMPSRELASMNLDIVDLLKKAKFHHSDCLSTWLLHFIATNYLIFSQKPEFQDLSVEERSFVEKHRWPSNMYLKQLAEYRKYIHSRKCRCLVM.

A rho-like region spans residues 1–175; it reads MSIHIVALGN…KELGATYLEL (175 aa). 2 consecutive BTB domains span residues 254–356 and 420–487; these read VDVV…QWEE and ADVV…CPAG. Residues 420–611 are interaction with Rab9; sequence ADVVFEIQGA…HSRKCRCLVM (192 aa).

As to quaternary structure, interacts with RAB9A and RAB9B (at lower level compared to RAB9A-binding). Interacts with M6PRBP1/TIP47.

Its subcellular location is the golgi apparatus. Functionally, rab9-regulated ATPase required for endosome to Golgi transport. Involved in transport vesicle docking at the Golgi complex, possibly by participating in release M6PRBP1/TIP47 from vesicles to permit their efficient docking and fusion at the Golgi. Specifically binds Rab9, but not other Rab proteins. Has low intrinsic ATPase activity due to autoinhibition, which is relieved by Rab9. This Mus musculus (Mouse) protein is Rho-related BTB domain-containing protein 3 (Rhobtb3).